The sequence spans 141 residues: Hemoglobin subunit alpha (141 aa).

Residues 1 to 141 (VLSSADKTNI…VSTVLTSKYR (141 aa)) enclose the Globin domain. S3 carries the phosphoserine modification. K7 is modified (N6-succinyllysine). T8 is subject to Phosphothreonine. N6-succinyllysine is present on K11. Residue K16 is modified to N6-acetyllysine; alternate. At K16 the chain carries N6-succinyllysine; alternate. Y24 carries the phosphotyrosine modification. Residue S35 is modified to Phosphoserine. K40 is subject to N6-succinyllysine. At S49 the chain carries Phosphoserine. H58 is an O2 binding site. A heme b-binding site is contributed by H87. S102 carries the phosphoserine modification. Phosphothreonine is present on T108. Residues S124 and S131 each carry the phosphoserine modification. Residues T134 and T137 each carry the phosphothreonine modification. The residue at position 138 (S138) is a Phosphoserine.

It belongs to the globin family. As to quaternary structure, heterotetramer of two alpha chains and two beta chains. As to expression, red blood cells.

Involved in oxygen transport from the lung to the various peripheral tissues. Its function is as follows. Hemopressin acts as an antagonist peptide of the cannabinoid receptor CNR1. Hemopressin-binding efficiently blocks cannabinoid receptor CNR1 and subsequent signaling. In Rousettus aegyptiacus (Egyptian fruit bat), this protein is Hemoglobin subunit alpha (HBA).